The following is a 352-amino-acid chain: Photosystem II D2 protein (352 aa).

Residue Thr-2 is modified to N-acetylthreonine. At Thr-2 the chain carries Phosphothreonine. Residues 40–60 form a helical membrane-spanning segment; that stretch reads TAYLALGGWLTGTTFVTSWYT. His-117 serves as a coordination point for chlorophyll a. Residues 124-140 traverse the membrane as a helical segment; that stretch reads GFMLRQFEIARSVKLRP. Pheophytin a contacts are provided by Gln-129 and Asn-142. The chain crosses the membrane as a helical span at residues 152 to 165; the sequence is VFVSVFLIYPLGQS. His-197 is a chlorophyll a binding site. The chain crosses the membrane as a helical span at residues 207-227; it reads AALLCAIHGATVENTLFEDGD. A plastoquinone is bound by residues His-214 and Phe-261. His-214 contributes to the Fe cation binding site. Position 268 (His-268) interacts with Fe cation. The helical transmembrane segment at 278–294 threads the bilayer; it reads GLWMSALGVVGLALNLR.

The protein belongs to the reaction center PufL/M/PsbA/D family. In terms of assembly, PSII is composed of 1 copy each of membrane proteins PsbA, PsbB, PsbC, PsbD, PsbE, PsbF, PsbH, PsbI, PsbJ, PsbK, PsbL, PsbM, PsbT, PsbX, PsbY, PsbZ, Psb30/Ycf12, at least 3 peripheral proteins of the oxygen-evolving complex and a large number of cofactors. It forms dimeric complexes. Requires The D1/D2 heterodimer binds P680, chlorophylls that are the primary electron donor of PSII, and subsequent electron acceptors. It shares a non-heme iron and each subunit binds pheophytin, quinone, additional chlorophylls, carotenoids and lipids. There is also a Cl(-1) ion associated with D1 and D2, which is required for oxygen evolution. The PSII complex binds additional chlorophylls, carotenoids and specific lipids. as cofactor.

It localises to the plastid. Its subcellular location is the chloroplast thylakoid membrane. The catalysed reaction is 2 a plastoquinone + 4 hnu + 2 H2O = 2 a plastoquinol + O2. In terms of biological role, photosystem II (PSII) is a light-driven water:plastoquinone oxidoreductase that uses light energy to abstract electrons from H(2)O, generating O(2) and a proton gradient subsequently used for ATP formation. It consists of a core antenna complex that captures photons, and an electron transfer chain that converts photonic excitation into a charge separation. The D1/D2 (PsbA/PsbD) reaction center heterodimer binds P680, the primary electron donor of PSII as well as several subsequent electron acceptors. D2 is needed for assembly of a stable PSII complex. This is Photosystem II D2 protein from Pleurastrum terricola (Filamentous green alga).